A 666-amino-acid polypeptide reads, in one-letter code: Enzymatic polyprotein (666 aa).

Residue Asp54 is part of the active site. The Reverse transcriptase domain occupies 215-445 (ENPIDPIKSK…EKINFLGLEI (231 aa)).

Belongs to the caulimoviridae enzymatic polyprotein family.

The enzyme catalyses DNA(n) + a 2'-deoxyribonucleoside 5'-triphosphate = DNA(n+1) + diphosphate. Functionally, encodes for at least two polypeptides: protease (PR) and reverse transcriptase (RT). The protease processes the polyprotein in cis. Reverse transcriptase is multifunctional enzyme that converts the viral RNA genome into dsDNA in viral cytoplasmic capsids. This enzyme displays a DNA polymerase activity that can copy either DNA or RNA templates, and a ribonuclease H (RNase H) activity that cleaves the RNA strand of RNA-DNA heteroduplexes in a partially processive 3'- to 5'-endonucleasic mode. Neo-synthesized pregenomic RNA (pgRNA) are encapsidated, and reverse-transcribed inside the nucleocapsid. Partial (+)DNA is synthesized from the (-)DNA template and generates the relaxed circular DNA (RC-DNA) genome. After budding and infection, the RC-DNA migrates in the nucleus, and is converted into a plasmid-like covalently closed circular DNA (cccDNA). The polypeptide is Enzymatic polyprotein (Figwort mosaic virus (strain DxS) (FMV)).